A 372-amino-acid polypeptide reads, in one-letter code: Histidine protein methyltransferase 1 homolog (372 aa).

Disordered regions lie at residues 30–55 (SKEL…QFDL) and 68–103 (NAAP…AKEH). Residues 39–49 (QKGEERDRKCS) are compositionally biased toward basic and acidic residues. Over residues 70–87 (APSQDTDSPLSAASSSRN) the composition is skewed to polar residues. Residues Ser-72 and Ser-77 each carry the phosphoserine modification. The residue at position 154 (His-154) is a Tele-methylhistidine; by autocatalysis. Residues 168 to 172 (IWECT), Gly-195, and 216 to 218 (QDY) each bind S-adenosyl-L-methionine. Residues 247–253 (PDVKRCR) carry the Nuclear localization signal motif. S-adenosyl-L-methionine contacts are provided by residues 268–270 (GEW) and Ser-293.

Belongs to the methyltransferase superfamily. METTL18 family. As to quaternary structure, interacts with GRWD1 and members of the heat shock protein 90 and 70 families; these proteins may possibly be methylation substrates for the enzyme. Monomethylated at His-154 through automethylation. Automethylation at His-154 positively regulates the methyltransferase activity toward RPL3. Probably methylated on other residues.

The protein resides in the cytoplasm. Its subcellular location is the cytosol. It localises to the nucleus. It is found in the nucleolus. The enzyme catalyses L-histidyl-[protein] + S-adenosyl-L-methionine = N(tele)-methyl-L-histidyl-[protein] + S-adenosyl-L-homocysteine + H(+). Its function is as follows. Protein-L-histidine N-tele-methyltransferase that specifically monomethylates RPL3, thereby regulating translation elongation. Histidine methylation of RPL3 regulates translation elongation by slowing ribosome traversal on tyrosine codons: slower elongation provides enough time for proper folding of synthesized proteins and prevents cellular aggregation of tyrosine-rich proteins. This Homo sapiens (Human) protein is Histidine protein methyltransferase 1 homolog.